The sequence spans 371 residues: MEGWLGNLLAKSVKDKYIPVIVGRRDLWNKVFTPKSVNPDDNYEALEIVGDGVASYFFPSYFLKRFPQLNSPKGVKTVARLKIYYGSKKSFSSIADSLGFWKFIRSGPVPVNPSTRESLLEDTFEAFLGAVCMAVDDEYSIDGLGAVVAYKIMADIFDDMDISLEYTALFDTVTRLKELMDVKKDVLGGDAVYNHRGDTTVITLKGRVIGKATGAIKRDRAKEAAGQALDLLRREGHFREHDDDAVVKVAKGPAGDGLVVAQSALGGFTVFGAESGVVEGSGGTVAQALSRVVGTKRPSAVEVAGGDYKSLLKEYLESVGETDSVNYIHEGVTVTMTRKGKPVATANHLVKKVREQLASRDYYRTVHAKGV.

Positions 10-136 constitute an RNase III domain; that stretch reads AKSVKDKYIP…FLGAVCMAVD (127 aa).

It belongs to the IIV-6 142R family.

It catalyses the reaction Endonucleolytic cleavage to 5'-phosphomonoester.. Functionally, digests double-stranded RNA. The sequence is that of Putative ribonuclease 3 from Frog virus 3 (isolate Goorha) (FV-3).